The chain runs to 379 residues: MAKLGPGQGLGCEAAEGSLVPSRKREYKPCGKHTEGKRPLYAIGFNFMDARYYDVFATVGGNRVTTYRCLENGSFALLQAYVDEDKDESFYTLSWARDHVDGSPLLVAAGSNGIIRVINCATEKLAKSFVGHGDSINEIRTQPLKPSLIISASKDESVRLWNVHTGICILIFAGAGGHRNEVLSVDFHPSDIERFASCGMDNTVKIWSMKEFWLYVDKSYSWTDLPSKFPTKYVQFPVLIAAVHSNYVDCTRWLGDFILSKSVDNEIVLWEPKTKEQSPGEGSIDILQKYPVPECDIWFIKFSCDFHFNQLAIGNREGKIYVWEVQSSPPVLIARLYNQQCKSPIRQTAVSFDGSTILGAGEDGTIWRWDEVDHPSSRN.

WD repeat units lie at residues 85 to 128 (DKDE…LAKS), 131 to 171 (GHGD…CILI), 177 to 217 (GHRN…LYVD), 243 to 280 (VHSN…QSPG), 292 to 333 (VPEC…PVLI), and 340 to 378 (QCKS…PSSR).

Belongs to the WD repeat ESC family. As to expression, widely expressed. Expressed in the embryo sac before pollination. After pollination, its expression persists, predominantly in the embryo and at lower levels in the endosperm.

The protein localises to the nucleus. Its function is as follows. Polycomb group (PcG) protein. PcG proteins act by forming multiprotein complexes, which are required to maintain the transcriptionally repressive state of homeotic genes throughout development. PcG proteins are not required to initiate repression, but to maintain it during later stages of development. They probably act via the methylation of histones, rendering chromatin heritably changed in its expressibility. This is Polycomb group protein FIE2 (FIE2) from Zea mays (Maize).